We begin with the raw amino-acid sequence, 679 residues long: DNA-directed RNA polymerase subunit beta' (679 aa).

The Zn(2+) site is built by Cys-69, Cys-71, Cys-87, and Cys-90. Mg(2+)-binding residues include Asp-489, Asp-491, and Asp-493.

This sequence belongs to the RNA polymerase beta' chain family. RpoC1 subfamily. As to quaternary structure, in plastids the minimal PEP RNA polymerase catalytic core is composed of four subunits: alpha, beta, beta', and beta''. When a (nuclear-encoded) sigma factor is associated with the core the holoenzyme is formed, which can initiate transcription. The cofactor is Mg(2+). It depends on Zn(2+) as a cofactor.

It localises to the plastid. The protein localises to the chloroplast. It catalyses the reaction RNA(n) + a ribonucleoside 5'-triphosphate = RNA(n+1) + diphosphate. In terms of biological role, DNA-dependent RNA polymerase catalyzes the transcription of DNA into RNA using the four ribonucleoside triphosphates as substrates. In Phalaenopsis aphrodite subsp. formosana (Moth orchid), this protein is DNA-directed RNA polymerase subunit beta'.